A 78-amino-acid chain; its full sequence is Large ribosomal subunit protein bL28 (78 aa).

Positions 1-24 (MSQVCQVTGKRPVTGNNVSHSQRK) are disordered.

This sequence belongs to the bacterial ribosomal protein bL28 family.

The protein is Large ribosomal subunit protein bL28 of Chromohalobacter salexigens (strain ATCC BAA-138 / DSM 3043 / CIP 106854 / NCIMB 13768 / 1H11).